We begin with the raw amino-acid sequence, 359 residues long: Nicotinate-nucleotide--dimethylbenzimidazole phosphoribosyltransferase (359 aa).

Glu-318 acts as the Proton acceptor in catalysis.

It belongs to the CobT family. In terms of assembly, homodimer.

The enzyme catalyses 5,6-dimethylbenzimidazole + nicotinate beta-D-ribonucleotide = alpha-ribazole 5'-phosphate + nicotinate + H(+). Its pathway is nucleoside biosynthesis; alpha-ribazole biosynthesis; alpha-ribazole from 5,6-dimethylbenzimidazole: step 1/2. In terms of biological role, catalyzes the synthesis of alpha-ribazole-5'-phosphate from nicotinate mononucleotide (NAMN) and 5,6-dimethylbenzimidazole (DMB). The sequence is that of Nicotinate-nucleotide--dimethylbenzimidazole phosphoribosyltransferase from Escherichia coli O157:H7.